A 194-amino-acid chain; its full sequence is Glycerol-3-phosphate acyltransferase (194 aa).

A run of 5 helical transmembrane segments spans residues 4–24 (EIVL…LLLA), 78–98 (EIWV…TVFL), 110–130 (LGVF…IFVF), 137–157 (YVSL…ALIE), and 161–181 (LLIT…RENI).

This sequence belongs to the PlsY family. Probably interacts with PlsX.

It is found in the cell inner membrane. It catalyses the reaction an acyl phosphate + sn-glycerol 3-phosphate = a 1-acyl-sn-glycero-3-phosphate + phosphate. It functions in the pathway lipid metabolism; phospholipid metabolism. In terms of biological role, catalyzes the transfer of an acyl group from acyl-phosphate (acyl-PO(4)) to glycerol-3-phosphate (G3P) to form lysophosphatidic acid (LPA). This enzyme utilizes acyl-phosphate as fatty acyl donor, but not acyl-CoA or acyl-ACP. This is Glycerol-3-phosphate acyltransferase from Geotalea daltonii (strain DSM 22248 / JCM 15807 / FRC-32) (Geobacter daltonii).